A 290-amino-acid chain; its full sequence is Prepilin leader peptidase/N-methyltransferase (290 aa).

The chain crosses the membrane as a helical span at residues 13–33 (AFVLCTILLGLLVGSFLNVVV). Zn(2+) is bound by residues Cys-72, Cys-75, Cys-97, and Cys-100. 5 helical membrane-spanning segments follow: residues 128 to 148 (FTWQAGAMLLLTWGLLAMSLI), 158 to 178 (VLVLPLLWLGLIANHFGLFAS), 183 to 203 (LFGAVFGYLSLWSVFWLFKLV), 228 to 248 (ILPLTILLSSLVGAILGVIML), and 261 to 276 (FGPYLAIAGWIALLWG).

This sequence belongs to the peptidase A24 family. Zn(2+) is required as a cofactor.

Its subcellular location is the cell inner membrane. The catalysed reaction is Typically cleaves a -Gly-|-Phe- bond to release an N-terminal, basic peptide of 5-8 residues from type IV prepilin, and then N-methylates the new N-terminal amino group, the methyl donor being S-adenosyl-L-methionine.. Plays an essential role in type IV pili and type II pseudopili formation by proteolytically removing the leader sequence from substrate proteins and subsequently monomethylating the alpha-amino group of the newly exposed N-terminal phenylalanine. Substrates include proteins required for pilus biogenesis PilE, PilV, PilW, and PilX as well as some components of the type II general secretory apparatus GspG, GspH, GspI and GspJ. This Pseudomonas aeruginosa (strain ATCC 15692 / DSM 22644 / CIP 104116 / JCM 14847 / LMG 12228 / 1C / PRS 101 / PAO1) protein is Prepilin leader peptidase/N-methyltransferase (pilD).